Reading from the N-terminus, the 889-residue chain is Voltage-gated potassium channel KCNC3 (889 aa).

Residues 1–80 form an important for normal N-type inactivation region; that stretch reads MLSSVCVWSF…CSGLPAVAMG (80 aa). Residues 1–291 lie on the Cytoplasmic side of the membrane; sequence MLSSVCVWSF…EDPYSSRAAR (291 aa). The interval 10 to 66 is disordered; sequence FSGRQGTRKQHSQPAPTPQPPESSPPPLLPPPQQQCAQPGTAASPAGAPLSCGPGGR. A compositionally biased stretch (pro residues) spans 24–42; that stretch reads APTPQPPESSPPPLLPPPQ. Zn(2+) is bound by residues His-159, Cys-165, Cys-186, and Cys-187. Residues 202 to 231 form a disordered region; sequence DSFEAPDSSGNANANAGGAHDAGLDDEAGA. Low complexity predominate over residues 211–222; that stretch reads GNANANAGGAHD. A helical membrane pass occupies residues 292-310; that stretch reads YVAFASLFFILISITTFCL. N-linked (GlcNAc...) asparagine glycosylation occurs at Asn-321. Residues 352 to 371 form a helical membrane-spanning segment; that stretch reads VEGVCVVWFTFEFLMRVTFC. Over 372–380 the chain is Cytoplasmic; it reads PDKVEFLKS. A helical transmembrane segment spans residues 381–399; the sequence is SLNIIDCVAILPFYLEVGL. A helical; Voltage-sensor transmembrane segment spans residues 413 to 435; sequence FLRVVRFVRILRIFKLTRHFVGL. Residues 436–448 lie on the Cytoplasmic side of the membrane; that stretch reads RVLGHTLRASTNE. The chain crosses the membrane as a helical span at residues 449–470; the sequence is FLLLIIFLALGVLIFATMIYYA. Positions 504, 505, 506, and 507 each coordinate K(+). Residues 504-509 carry the Selectivity filter motif; the sequence is TLGYGD. The chain crosses the membrane as a helical span at residues 519 to 540; that stretch reads LVGALCALAGVLTIAMPVPVIV. Residues 541 to 889 lie on the Cytoplasmic side of the membrane; sequence NNFGMYYSLA…FPSRHSSPAV (349 aa). 3 disordered regions span residues 557 to 627, 691 to 834, and 852 to 889; these read PKKK…LLRG, IDQP…PQSL, and TLGF…SPAV. Arg-626 is modified (omega-N-methylarginine). Residues Ser-697 and Ser-702 each carry the phosphoserine modification. The span at 748–764 shows a compositional bias: low complexity; sequence SQAPPASCPTSTPTQQP. Thr-759 carries the phosphothreonine modification. The span at 794-808 shows a compositional bias: basic residues; it reads HRSHQPPGKHQRGGR.

This sequence belongs to the potassium channel family. C (Shaw) (TC 1.A.1.2) subfamily. Kv3.3/KCNC3 sub-subfamily. As to quaternary structure, homotetramer. Heterotetramer with KCNC1. Interacts (via C-terminus) with HAX1; this interaction modulates channel gating. Identified in a complex with ACTR3, a subunit of the Arp2/3 complex; this interaction is indirect and depends on the presence of HAX1. In terms of processing, N-glycosylated. In terms of tissue distribution, detected on Purkinje cells in the cerebellum molecular layer (at protein level).

It localises to the cell membrane. The protein resides in the presynaptic cell membrane. It is found in the perikaryon. Its subcellular location is the cell projection. The protein localises to the axon. It localises to the dendrite. The protein resides in the dendritic spine membrane. It is found in the cytoplasm. Its subcellular location is the cell cortex. The protein localises to the cytoskeleton. It catalyses the reaction K(+)(in) = K(+)(out). Functionally, voltage-gated potassium channel that plays an important role in the rapid repolarization of fast-firing brain neurons. The channel opens in response to the voltage difference across the membrane, forming a potassium-selective channel through which potassium ions pass in accordance with their electrochemical gradient. The channel displays rapid activation and inactivation kinetics. It plays a role in the regulation of the frequency, shape and duration of action potentials in Purkinje cells. Required for normal survival of cerebellar neurons, probably via its role in regulating the duration and frequency of action potentials that in turn regulate the activity of voltage-gated Ca(2+) channels and cellular Ca(2+) homeostasis. Required for normal motor function. Plays a role in the reorganization of the cortical actin cytoskeleton and the formation of actin veil structures in neuronal growth cones via its interaction with HAX1 and the Arp2/3 complex. The sequence is that of Voltage-gated potassium channel KCNC3 from Rattus norvegicus (Rat).